We begin with the raw amino-acid sequence, 298 residues long: uncharacterized protein (298 aa).

The protein belongs to the NAD(P)-dependent epimerase/dehydratase family.

This is an uncharacterized protein from Saccharomyces cerevisiae (strain ATCC 204508 / S288c) (Baker's yeast).